We begin with the raw amino-acid sequence, 320 residues long: Malate dehydrogenase (320 aa).

NAD(+) is bound by residues 10 to 15 (GAGQIG) and D34. Substrate-binding residues include R83 and R89. NAD(+) is bound by residues N96 and 119–121 (ITN). Substrate-binding residues include N121 and R152. Residue H176 is the Proton acceptor of the active site.

It belongs to the LDH/MDH superfamily. MDH type 3 family.

The catalysed reaction is (S)-malate + NAD(+) = oxaloacetate + NADH + H(+). Functionally, catalyzes the reversible oxidation of malate to oxaloacetate. The protein is Malate dehydrogenase of Methylorubrum extorquens (strain CM4 / NCIMB 13688) (Methylobacterium extorquens).